The sequence spans 200 residues: dTTP/UTP pyrophosphatase (200 aa).

D72 acts as the Proton acceptor in catalysis.

Belongs to the Maf family. YhdE subfamily. It depends on a divalent metal cation as a cofactor.

It is found in the cytoplasm. The catalysed reaction is dTTP + H2O = dTMP + diphosphate + H(+). It catalyses the reaction UTP + H2O = UMP + diphosphate + H(+). Its function is as follows. Nucleoside triphosphate pyrophosphatase that hydrolyzes dTTP and UTP. May have a dual role in cell division arrest and in preventing the incorporation of modified nucleotides into cellular nucleic acids. This is dTTP/UTP pyrophosphatase from Pseudomonas savastanoi pv. phaseolicola (strain 1448A / Race 6) (Pseudomonas syringae pv. phaseolicola (strain 1448A / Race 6)).